The sequence spans 50 residues: Inducible serine protease inhibitor 1 (50 aa).

The disordered stretch occupies residues 1–27 (DLVXGTNFXKNNPXSTRVAANSXRSPS). Residues 8-25 (FXKNNPXSTRVAANSXRS) show a composition bias toward polar residues.

Functionally, inhibits trypsin and the toxin protease PR2 of M.anisopliae. Does not inhibit chymotrypsin, subtilisin Carlsberg, proteinase K, porcine pancreatic elastase and the toxin protease PR1 of M.anisopliae. This chain is Inducible serine protease inhibitor 1, found in Galleria mellonella (Greater wax moth).